The primary structure comprises 432 residues: Ectonucleoside triphosphate diphosphohydrolase 5 (432 aa).

A signal peptide spans 1-24 (MALYQGAAFFMLVASCVCSTVFHR). Glu-175 serves as the catalytic Proton acceptor. N-linked (GlcNAc...) asparagine glycosylation occurs at Asn-235. 2 disulfide bridges follow: Cys-275–Cys-307 and Cys-367–Cys-381. N-linked (GlcNAc...) asparagine glycosylation occurs at Asn-372.

It belongs to the GDA1/CD39 NTPase family. In terms of assembly, monomer; active form. Homodimer; disulfide-linked. Homodimers are enzymatically inactive. Ca(2+) serves as cofactor. It depends on Mg(2+) as a cofactor. N-glycosylated; high-mannose type.

The protein localises to the endoplasmic reticulum. It is found in the secreted. The enzyme catalyses a ribonucleoside 5'-diphosphate + H2O = a ribonucleoside 5'-phosphate + phosphate + H(+). It catalyses the reaction GDP + H2O = GMP + phosphate + H(+). It carries out the reaction UDP + H2O = UMP + phosphate + H(+). The catalysed reaction is IDP + H2O = IMP + phosphate + H(+). The enzyme catalyses CDP + H2O = CMP + phosphate + H(+). It catalyses the reaction ADP + H2O = AMP + phosphate + H(+). It functions in the pathway protein modification; protein glycosylation. Hydrolyzes nucleoside diphosphates with a preference for GDP, IDP and UDP compared to ADP and CDP. In the lumen of the endoplasmic reticulum, hydrolyzes UDP that acts as an end-product feedback inhibitor of the UDP-Glc:glycoprotein glucosyltransferases. UMP can be transported back by an UDP-sugar antiporter to the cytosol where it is consumed to regenerate UDP-glucose. Therefore, it positively regulates protein reglucosylation by clearing UDP from the ER lumen and by promoting the regeneration of UDP-glucose. Protein reglucosylation is essential to proper glycoprotein folding and quality control in the ER. The chain is Ectonucleoside triphosphate diphosphohydrolase 5 (ENTPD5) from Bos taurus (Bovine).